The primary structure comprises 655 residues: 1-deoxy-D-xylulose-5-phosphate synthase (655 aa).

Residues H73 and S114 to A116 each bind thiamine diphosphate. Position 145 (D145) interacts with Mg(2+). Residues G146–A147, N174, Y285, and E367 each bind thiamine diphosphate. N174 lines the Mg(2+) pocket. A disordered region spans residues R626 to R655. The segment covering R646–R655 has biased composition (basic and acidic residues).

It belongs to the transketolase family. DXPS subfamily. As to quaternary structure, homodimer. Mg(2+) serves as cofactor. It depends on thiamine diphosphate as a cofactor.

The enzyme catalyses D-glyceraldehyde 3-phosphate + pyruvate + H(+) = 1-deoxy-D-xylulose 5-phosphate + CO2. It participates in metabolic intermediate biosynthesis; 1-deoxy-D-xylulose 5-phosphate biosynthesis; 1-deoxy-D-xylulose 5-phosphate from D-glyceraldehyde 3-phosphate and pyruvate: step 1/1. Functionally, catalyzes the acyloin condensation reaction between C atoms 2 and 3 of pyruvate and glyceraldehyde 3-phosphate to yield 1-deoxy-D-xylulose-5-phosphate (DXP). This Frankia casuarinae (strain DSM 45818 / CECT 9043 / HFP020203 / CcI3) protein is 1-deoxy-D-xylulose-5-phosphate synthase.